Reading from the N-terminus, the 343-residue chain is UDP-3-O-acylglucosamine N-acyltransferase (343 aa).

The active-site Proton acceptor is His245.

It belongs to the transferase hexapeptide repeat family. LpxD subfamily. In terms of assembly, homotrimer.

The enzyme catalyses a UDP-3-O-[(3R)-3-hydroxyacyl]-alpha-D-glucosamine + a (3R)-hydroxyacyl-[ACP] = a UDP-2-N,3-O-bis[(3R)-3-hydroxyacyl]-alpha-D-glucosamine + holo-[ACP] + H(+). It functions in the pathway bacterial outer membrane biogenesis; LPS lipid A biosynthesis. Its function is as follows. Catalyzes the N-acylation of UDP-3-O-acylglucosamine using 3-hydroxyacyl-ACP as the acyl donor. Is involved in the biosynthesis of lipid A, a phosphorylated glycolipid that anchors the lipopolysaccharide to the outer membrane of the cell. The sequence is that of UDP-3-O-acylglucosamine N-acyltransferase from Phenylobacterium zucineum (strain HLK1).